Consider the following 582-residue polypeptide: BTB/POZ domain and ankyrin repeat-containing protein NPR1 (582 aa).

The segment covering 1–18 (MEPPTSHVTNAFSDSDSA) has biased composition (polar residues). The tract at residues 1–25 (MEPPTSHVTNAFSDSDSASVEEGGA) is disordered. Residues 55–140 (ADARIAVPGG…VLDYLYSGRV (86 aa)) form the BTB domain. The C2HC NPR-type zinc-finger motif lies at 147-161 (ACLCVDEDCAHVGCH). Positions 150, 155, 157, and 160 each coordinate Zn(2+). ANK repeat units follow at residues 229–258 (RSNL…SLGL), 269–299 (KHVR…NLDD), 301–328 (FALH…DVNH), and 332–361 (RGYT…RPAD). Residues 391-526 (PSPKDRLCIE…VLDKIMDDET (136 aa)) form a salicylic acid-binding core (SBC) region. Position 436 (R436) interacts with salicylate. Positions 551 to 582 (QKAFHEDKEENDRSGLSSSSSSTSIGAIRPRR) are disordered. Positions 553–563 (AFHEDKEENDR) are enriched in basic and acidic residues. Over residues 564–574 (SGLSSSSSSTS) the composition is skewed to low complexity.

It belongs to the plant 'ANKYRIN-BTB/POZ' family. 'NPR1-like' subfamily. Oligomer in an uninduced state; disulfide-linked. Forms activated monomer upon changes in cellular redox potential. Interacts with TGA2.1, TGA2.2, TGA2.3, LG2, TGAL1 and TGAL4. Interacts with NRR, RH1, RH2 and RH3.

It localises to the cytoplasm. Its subcellular location is the nucleus. The protein resides in the nuclear body. It functions in the pathway protein modification; protein ubiquitination. Functionally, salicylic acid (SA)-binding substrate-specific adapter of an E3 ubiquitin-protein ligase complex (CUL3-RBX1-BTB) which mediates the ubiquitination and subsequent proteasomal degradation of target proteins. Transcription cofactor that represses gene expression in the absence of salicylic acid (SA), when attached to negative cis-elements (W-box) with WRKY transcription factors, but stimulates gene expression upon activation by SA, when sumoylated and attached to positive cis-elements (as-1) with TGA transcription factors, thus confering immunity through a series of gene regulations ending in a significant increase in antimicrobial and defense genes expression. Key positive factor of disease resistance. Plays an essential role in benzothiadiazole (BTH)-induced resistance to the blast fungus disease caused by Magnaporthe oryzae. Involved in defense response against the bacterial blight disease caused by Xanthomonas oryzae pv. oryzae (Xoo). Over-expression of NPR1/NH1 confers disease resistance to Xoo, but also enhances herbivore susceptibility. Functions as a transcriptional coactivator of TGA2.1 and LG2 in vitro. Involved in defense response against herbivore. Plants silencing NPR1/NH1 have increased herbivore-induced trypsin proteinase inhibitors and volatiles, which reduces the performance of the striped stem borer (SSB) Chilo suppressalis. This Oryza sativa subsp. japonica (Rice) protein is BTB/POZ domain and ankyrin repeat-containing protein NPR1.